A 456-amino-acid chain; its full sequence is Exodeoxyribonuclease 7 large subunit (456 aa).

The protein belongs to the XseA family. In terms of assembly, heterooligomer composed of large and small subunits.

The protein resides in the cytoplasm. The enzyme catalyses Exonucleolytic cleavage in either 5'- to 3'- or 3'- to 5'-direction to yield nucleoside 5'-phosphates.. In terms of biological role, bidirectionally degrades single-stranded DNA into large acid-insoluble oligonucleotides, which are then degraded further into small acid-soluble oligonucleotides. In Escherichia coli O157:H7, this protein is Exodeoxyribonuclease 7 large subunit.